The chain runs to 223 residues: Small ribosomal subunit protein uS3 (223 aa).

The KH type-2 domain occupies 39–108; it reads IRNFVKKNSY…NILINIVEVK (70 aa).

It belongs to the universal ribosomal protein uS3 family. Part of the 30S ribosomal subunit. Forms a tight complex with proteins S10 and S14.

Functionally, binds the lower part of the 30S subunit head. Binds mRNA in the 70S ribosome, positioning it for translation. In Clostridium botulinum (strain 657 / Type Ba4), this protein is Small ribosomal subunit protein uS3.